A 197-amino-acid polypeptide reads, in one-letter code: Ribonuclease HII (197 aa).

In terms of domain architecture, RNase H type-2 spans 4-197; that stretch reads IWVCGVDEAG…VRKALESVAS (194 aa). Positions 10, 11, and 106 each coordinate a divalent metal cation.

The protein belongs to the RNase HII family. The cofactor is Mn(2+). It depends on Mg(2+) as a cofactor.

It is found in the cytoplasm. The catalysed reaction is Endonucleolytic cleavage to 5'-phosphomonoester.. Functionally, endonuclease that specifically degrades the RNA of RNA-DNA hybrids. The chain is Ribonuclease HII from Polynucleobacter necessarius subsp. necessarius (strain STIR1).